Reading from the N-terminus, the 155-residue chain is Ribonuclease H (155 aa).

The RNase H type-1 domain occupies 1–142; the sequence is MLKQVEIFTD…CDELARAAAS (142 aa). Residues Asp10, Glu48, Asp70, and Asp134 each contribute to the Mg(2+) site.

The protein belongs to the RNase H family. Monomer. Requires Mg(2+) as cofactor.

It localises to the cytoplasm. The catalysed reaction is Endonucleolytic cleavage to 5'-phosphomonoester.. Endonuclease that specifically degrades the RNA of RNA-DNA hybrids. The sequence is that of Ribonuclease H from Klebsiella pneumoniae (strain 342).